The sequence spans 107 residues: Large ribosomal subunit protein bL21 (107 aa).

Belongs to the bacterial ribosomal protein bL21 family. As to quaternary structure, part of the 50S ribosomal subunit. Contacts protein L20.

Functionally, this protein binds to 23S rRNA in the presence of protein L20. This is Large ribosomal subunit protein bL21 from Chlamydia muridarum (strain MoPn / Nigg).